The sequence spans 1026 residues: Translation initiation factor IF-2, chloroplastic (1026 aa).

A chloroplast-targeting transit peptide spans 1-63; that stretch reads MPSMLVLVGT…KKWLCRYSVS (63 aa). Residues 158 to 173 show a composition bias toward basic and acidic residues; the sequence is AEKLEIPKPGNKEGGE. Disordered regions lie at residues 158–208, 230–284, and 300–393; these read AEKL…TMKS, FNRG…PPVK, and VSEE…KWSK. Residues 178–194 are compositionally biased toward polar residues; the sequence is SQPSANSSNSRNGSYAN. A compositionally biased stretch (pro residues) spans 254 to 269; it reads LAPPQPPFRPQPPVRP. Residues 306–317 show a composition bias toward basic and acidic residues; it reads SSVKSKERKPIL. Over residues 384 to 393 the composition is skewed to basic residues; the sequence is SGRKGRKWSK. Residues 499–672 enclose the tr-type G domain; sequence DRPPVITIMG…MLVAELQELK (174 aa). The interval 508–515 is G1; sequence GHVDHGKT. 508 to 515 is a GTP binding site; sequence GHVDHGKT. The tract at residues 533-537 is G2; that stretch reads GITQG. The interval 558-561 is G3; sequence DTPG. Residues 558–562 and 612–615 contribute to the GTP site; these read DTPGH and NKID. The G4 stretch occupies residues 612–615; that stretch reads NKID. Positions 648–650 are G5; the sequence is SAL.

Belongs to the TRAFAC class translation factor GTPase superfamily. Classic translation factor GTPase family. IF-2 subfamily.

Its subcellular location is the plastid. The protein resides in the chloroplast. Its function is as follows. One of the essential components for the initiation of protein synthesis. Protects formylmethionyl-tRNA from spontaneous hydrolysis and promotes its binding to the 30S ribosomal subunits. Also involved in the hydrolysis of GTP during the formation of the 70S ribosomal complex. This is Translation initiation factor IF-2, chloroplastic from Arabidopsis thaliana (Mouse-ear cress).